A 321-amino-acid chain; its full sequence is tRNA 2-thiolation protein NcsA (321 aa).

Lys204 participates in a covalent cross-link: Glycyl lysine isopeptide (Lys-Gly) (interchain with G-Cter in SAMP2).

This sequence belongs to the TtcA family. CTU1/NCS6/ATPBD3 subfamily. Interacts with monomeric and polymeric forms of SAMP2. Interacts with UbaA. Interacts with archaeal EF-1-alpha and Pan1. Non-sampylated protein forms a complex with archaeal CPSF1 of approximately 100 kDa. Post-translationally, sampylated at Lys-204 with the archaeal ubiquitin-like protein SAMP2. Polymeric chains of SAMP2 are also linked.

Its pathway is tRNA modification; 5-methoxycarbonylmethyl-2-thiouridine-tRNA biosynthesis. Functionally, required for thiolation of mcm(5)S(2)U at the wobble uridine position of tRNA specific for lysine (tRNA(Lys)). Probably acts by catalyzing adenylation of tRNA, an intermediate required for 2-thiolation. May also act as a sulfurtransferase that transfers sulfur from thiocarboxylated SAMP2 onto the uridine of tRNA at wobble position. Required for cell growth at elevated temperatures. This Haloferax volcanii (strain ATCC 29605 / DSM 3757 / JCM 8879 / NBRC 14742 / NCIMB 2012 / VKM B-1768 / DS2) (Halobacterium volcanii) protein is tRNA 2-thiolation protein NcsA.